Consider the following 662-residue polypeptide: Probable quinol oxidase subunit 1 (662 aa).

Helical transmembrane passes span 14–34 and 56–76; these read WMII…IAVI and IGIM…IDAL. Residue His-102 participates in Fe(II)-heme a binding. 8 consecutive transmembrane segments (helical) span residues 103 to 123, 140 to 160, 187 to 207, 228 to 248, 273 to 293, 311 to 331, 336 to 356, and 376 to 396; these read GVIM…NVVI, VSFW…IVGG, IAIQ…FVTI, FITT…LALM, FFWV…FGMY, MIWA…HHFF, GALI…PTGV, and MLFS…GVML. His-279, Tyr-283, His-328, and His-329 together coordinate Cu cation. The segment at residues 279 to 283 is a cross-link (1'-histidyl-3'-tyrosine (His-Tyr)); it reads HPEVY. His-414 is a binding site for heme a3. 5 helical membrane passes run 415–435, 451–471, 492–512, 587–604, and 608–627; these read FHYT…IFWY, CFWF…ILGL, FIST…VASI, PVGF…FFLI, and IVPA…WRSF. His-416 contributes to the Fe(II)-heme a binding site.

Belongs to the heme-copper respiratory oxidase family. Requires Cu cation as cofactor. Ferriheme a serves as cofactor. It depends on Heme A3. as a cofactor.

It localises to the cell membrane. It carries out the reaction 2 a quinol + O2 = 2 a quinone + 2 H2O. The protein operates within energy metabolism; oxidative phosphorylation. Its function is as follows. Catalyzes quinol oxidation with the concomitant reduction of oxygen to water. This is Probable quinol oxidase subunit 1 (qoxB) from Staphylococcus epidermidis (strain ATCC 35984 / DSM 28319 / BCRC 17069 / CCUG 31568 / BM 3577 / RP62A).